The sequence spans 196 residues: ATP-dependent Clp protease proteolytic subunit (196 aa).

The active-site Nucleophile is the Ser-98. His-123 is an active-site residue.

The protein belongs to the peptidase S14 family. In terms of assembly, fourteen ClpP subunits assemble into 2 heptameric rings which stack back to back to give a disk-like structure with a central cavity, resembling the structure of eukaryotic proteasomes.

The protein localises to the cytoplasm. It carries out the reaction Hydrolysis of proteins to small peptides in the presence of ATP and magnesium. alpha-casein is the usual test substrate. In the absence of ATP, only oligopeptides shorter than five residues are hydrolyzed (such as succinyl-Leu-Tyr-|-NHMec, and Leu-Tyr-Leu-|-Tyr-Trp, in which cleavage of the -Tyr-|-Leu- and -Tyr-|-Trp bonds also occurs).. Its function is as follows. Cleaves peptides in various proteins in a process that requires ATP hydrolysis. Has a chymotrypsin-like activity. Plays a major role in the degradation of misfolded proteins. The chain is ATP-dependent Clp protease proteolytic subunit from Anoxybacillus flavithermus (strain DSM 21510 / WK1).